A 393-amino-acid polypeptide reads, in one-letter code: NAD(P)H-quinone oxidoreductase subunit H, chloroplastic (393 aa).

This sequence belongs to the complex I 49 kDa subunit family. NDH is composed of at least 16 different subunits, 5 of which are encoded in the nucleus.

It localises to the plastid. Its subcellular location is the chloroplast thylakoid membrane. The enzyme catalyses a plastoquinone + NADH + (n+1) H(+)(in) = a plastoquinol + NAD(+) + n H(+)(out). The catalysed reaction is a plastoquinone + NADPH + (n+1) H(+)(in) = a plastoquinol + NADP(+) + n H(+)(out). Functionally, NDH shuttles electrons from NAD(P)H:plastoquinone, via FMN and iron-sulfur (Fe-S) centers, to quinones in the photosynthetic chain and possibly in a chloroplast respiratory chain. The immediate electron acceptor for the enzyme in this species is believed to be plastoquinone. Couples the redox reaction to proton translocation, and thus conserves the redox energy in a proton gradient. This chain is NAD(P)H-quinone oxidoreductase subunit H, chloroplastic, found in Saccharum hybrid (Sugarcane).